A 503-amino-acid polypeptide reads, in one-letter code: Poxin-Schlafen (503 aa).

The active-site Proton donor is His15. Tyr136 acts as the Shared with catalytic histidine of dimeric partner in catalysis. Residue Lys140 is the Proton acceptor; shared with catalytic histidine of dimeric partner of the active site.

This sequence in the N-terminal section; belongs to the poxin family. It in the C-terminal section; belongs to the Schlafen protein family. Subgroup poxviridae B3 subfamily. In terms of assembly, homodimer.

The catalysed reaction is 2',3'-cGAMP + H2O = Gp(2'-5')Ap(3') + H(+). In terms of biological role, nuclease that is responsible for viral evasion of host cGAS-STING innate immunity. Cleaves 2',3'-cGAMP which is produced by host cGAS following recognition of cytosolic DNA and blocks the subsequent 2',3'-cGAMP-mediated activation of TMEM173/STING, which normally spreads to adjacent cells and activates the interferon and NF-kappa-B immune responses. This chain is Poxin-Schlafen (OPG188), found in Cynomys gunnisoni (Gunnison's prairie dog).